A 477-amino-acid chain; its full sequence is Glycogen synthase (477 aa).

Lys15 serves as a coordination point for ADP-alpha-D-glucose.

This sequence belongs to the glycosyltransferase 1 family. Bacterial/plant glycogen synthase subfamily.

It carries out the reaction [(1-&gt;4)-alpha-D-glucosyl](n) + ADP-alpha-D-glucose = [(1-&gt;4)-alpha-D-glucosyl](n+1) + ADP + H(+). Its pathway is glycan biosynthesis; glycogen biosynthesis. In terms of biological role, synthesizes alpha-1,4-glucan chains using ADP-glucose. The polypeptide is Glycogen synthase (Caldicellulosiruptor saccharolyticus (strain ATCC 43494 / DSM 8903 / Tp8T 6331)).